A 1447-amino-acid chain; its full sequence is Netrin receptor DCC (1447 aa).

The N-terminal stretch at 1–25 is a signal peptide; sequence MENSLRCVWVPKLAFVLFGASLFSA. 4 consecutive Ig-like C2-type domains span residues 26-135, 139-229, 234-326, and 331-416; these read HLQV…AKVA, PLRF…AEVR, PGLH…AELT, and PWFL…AQLI. The Extracellular segment spans residues 26-1097; the sequence is HLQVTGFQIK…GSVTPQKNSN (1072 aa). Intrachain disulfides connect C61–C117, C161–C212, and C261–C310. Residue N94 is glycosylated (N-linked (GlcNAc...) asparagine). 2 N-linked (GlcNAc...) asparagine glycosylation sites follow: N299 and N318. An intrachain disulfide couples C352 to C400. Fibronectin type-III domains are found at residues 431–524, 530–620, 625–718, 728–821, 846–942, and 947–1044; these read APRD…TQPE, PVEN…TLSD, PPQN…TPEN, QPSS…TDPT, PPVG…TYEA, and APKD…TLKV. N478 is a glycosylation site (N-linked (GlcNAc...) asparagine). N-linked (GlcNAc...) asparagine glycosylation is found at N628 and N702. Residues 1098–1122 traverse the membrane as a helical segment; it reads LLVIIVVTVGVITVLVVVIVAVICT. Residues 1123–1447 lie on the Cytoplasmic side of the membrane; sequence RRSSAQQRKK…QLNAITGSAF (325 aa). 2 disordered regions span residues 1126–1152 and 1165–1222; these read SAQQ…RPPD and IEKP…TLER. The segment covering 1129–1143 has biased composition (basic residues); sequence QRKKRATHSAGKRKG. Phosphoserine; by MAPK1 is present on S1178. Over residues 1179–1221 the composition is skewed to polar residues; the sequence is PIQSCQDLTPVSHSQSETQLGSKSTSHSGQDTEEAGSSMSTLE. A Phosphothreonine; by MAPK1 modification is found at T1187. S1267 is modified (phosphoserine; by MAPK1). Disordered stretches follow at residues 1288 to 1330 and 1394 to 1419; these read SVDR…PSRT and LLPV…SANV. Residues 1297-1310 are compositionally biased toward polar residues; it reads RSQSVSEGPTTQQP. The segment at 1432-1439 is interaction with MYO10; the sequence is LEGLMKQL.

It belongs to the immunoglobulin superfamily. DCC family. In terms of assembly, interacts with the cytoplasmic part of UNC5A, UNC5B, UNC5C and probably UNC5D. Interacts with DSCAM. Interacts with PTK2/FAK1 and MAPK1. Interacts with NTN1. Interacts with MYO10. Interacts with CBLN4; this interaction can be competed by NTN1. Interacts with SIAH1 and SIAH2. Ubiquitinated; mediated by SIAH1 or SIAH2 and leading to its subsequent proteasomal degradation. Found in axons of the central and peripheral nervous system and in differentiated cell types of the intestine. Not expressed in colorectal tumor cells that lost their capacity to differentiate into mucus producing cells.

It is found in the membrane. Receptor for netrin required for axon guidance. Mediates axon attraction of neuronal growth cones in the developing nervous system upon ligand binding. Its association with UNC5 proteins may trigger signaling for axon repulsion. It also acts as a dependence receptor required for apoptosis induction when not associated with netrin ligand. Implicated as a tumor suppressor gene. The sequence is that of Netrin receptor DCC (DCC) from Homo sapiens (Human).